A 155-amino-acid polypeptide reads, in one-letter code: SsrA-binding protein (155 aa).

It belongs to the SmpB family.

It localises to the cytoplasm. In terms of biological role, required for rescue of stalled ribosomes mediated by trans-translation. Binds to transfer-messenger RNA (tmRNA), required for stable association of tmRNA with ribosomes. tmRNA and SmpB together mimic tRNA shape, replacing the anticodon stem-loop with SmpB. tmRNA is encoded by the ssrA gene; the 2 termini fold to resemble tRNA(Ala) and it encodes a 'tag peptide', a short internal open reading frame. During trans-translation Ala-aminoacylated tmRNA acts like a tRNA, entering the A-site of stalled ribosomes, displacing the stalled mRNA. The ribosome then switches to translate the ORF on the tmRNA; the nascent peptide is terminated with the 'tag peptide' encoded by the tmRNA and targeted for degradation. The ribosome is freed to recommence translation, which seems to be the essential function of trans-translation. The protein is SsrA-binding protein of Lactococcus lactis subsp. lactis (strain IL1403) (Streptococcus lactis).